The following is a 343-amino-acid chain: Methionine import ATP-binding protein MetN (343 aa).

Residues 2–241 (ITLSHITKQF…PKTPLAQAFI (240 aa)) form the ABC transporter domain. 38–45 (GASGAGKS) serves as a coordination point for ATP.

Belongs to the ABC transporter superfamily. Methionine importer (TC 3.A.1.24) family. The complex is composed of two ATP-binding proteins (MetN), two transmembrane proteins (MetI) and a solute-binding protein (MetQ).

Its subcellular location is the cell inner membrane. The enzyme catalyses L-methionine(out) + ATP + H2O = L-methionine(in) + ADP + phosphate + H(+). The catalysed reaction is D-methionine(out) + ATP + H2O = D-methionine(in) + ADP + phosphate + H(+). In terms of biological role, part of the ABC transporter complex MetNIQ involved in methionine import. Responsible for energy coupling to the transport system. This chain is Methionine import ATP-binding protein MetN, found in Sodalis glossinidius (strain morsitans).